The following is a 158-amino-acid chain: Cytochrome c-type biogenesis protein CcmE (158 aa).

Polar residues predominate over residues 1 to 11 (MTRPDSGSSPA). Residues 1–20 (MTRPDSGSSPAPLSEARRRK) form a disordered region. Over 1–23 (MTRPDSGSSPAPLSEARRRKRNP) the chain is Cytoplasmic. Residues 24–44 (LPTVLGITALLGLAGFIAFGN) traverse the membrane as a helical; Signal-anchor for type II membrane protein segment. Residues 45-158 (LNKSLEYFVT…ELRDLLEQSE (114 aa)) lie on the Extracellular side of the membrane. Heme-binding residues include H137 and Y141.

Belongs to the CcmE/CycJ family.

It is found in the cell membrane. Its function is as follows. Heme chaperone required for the biogenesis of c-type cytochromes. Transiently binds heme delivered by CcmC and transfers the heme to apo-cytochromes in a process facilitated by CcmF and CcmH. The sequence is that of Cytochrome c-type biogenesis protein CcmE from Deinococcus deserti (strain DSM 17065 / CIP 109153 / LMG 22923 / VCD115).